The following is a 130-amino-acid chain: Prefoldin subunit alpha (130 aa).

It belongs to the prefoldin subunit alpha family. Heterohexamer of two alpha and four beta subunits.

It localises to the cytoplasm. Functionally, molecular chaperone capable of stabilizing a range of proteins. Seems to fulfill an ATP-independent, HSP70-like function in archaeal de novo protein folding. In Thermoplasma volcanium (strain ATCC 51530 / DSM 4299 / JCM 9571 / NBRC 15438 / GSS1), this protein is Prefoldin subunit alpha.